A 145-amino-acid polypeptide reads, in one-letter code: Peptidyl-prolyl cis-trans isomerase (145 aa).

The PPIase cyclophilin-type domain occupies 1–145 (MTQAILETEK…LSVKIVTDAA (145 aa)).

The protein belongs to the cyclophilin-type PPIase family.

The catalysed reaction is [protein]-peptidylproline (omega=180) = [protein]-peptidylproline (omega=0). Its function is as follows. PPIases accelerate the folding of proteins. It catalyzes the cis-trans isomerization of proline imidic peptide bonds in oligopeptides. This chain is Peptidyl-prolyl cis-trans isomerase (rot), found in Synechococcus elongatus (strain ATCC 33912 / PCC 7942 / FACHB-805) (Anacystis nidulans R2).